We begin with the raw amino-acid sequence, 212 residues long: MPHPFDLSLYLVTDRRLTAERGLLETVEEAVAGGVTLVQLRDPEAKGRALAEEARALIGLLRPKGIPLIINDRVDVAAAVGAEGVHLGQDDLDPAAARAILGPDAIIGLSVGSLEELSASNLGPVDYVGCGPINATGTKGDAGGAIGIEGFAFLRSHIALPMVGIGGLKAEDAEAVMQAGANGIAVVSALCAAPDVTEAARTLKTIIETSRR.

4-amino-2-methyl-5-(diphosphooxymethyl)pyrimidine-binding positions include 39–41 (QLR) and N71. Mg(2+)-binding residues include D72 and D91. S110 is a 4-amino-2-methyl-5-(diphosphooxymethyl)pyrimidine binding site. 136–138 (TGT) is a 2-[(2R,5Z)-2-carboxy-4-methylthiazol-5(2H)-ylidene]ethyl phosphate binding site. K139 serves as a coordination point for 4-amino-2-methyl-5-(diphosphooxymethyl)pyrimidine. 2-[(2R,5Z)-2-carboxy-4-methylthiazol-5(2H)-ylidene]ethyl phosphate is bound by residues G167 and 187–188 (VS).

Belongs to the thiamine-phosphate synthase family. It depends on Mg(2+) as a cofactor.

It carries out the reaction 2-[(2R,5Z)-2-carboxy-4-methylthiazol-5(2H)-ylidene]ethyl phosphate + 4-amino-2-methyl-5-(diphosphooxymethyl)pyrimidine + 2 H(+) = thiamine phosphate + CO2 + diphosphate. The enzyme catalyses 2-(2-carboxy-4-methylthiazol-5-yl)ethyl phosphate + 4-amino-2-methyl-5-(diphosphooxymethyl)pyrimidine + 2 H(+) = thiamine phosphate + CO2 + diphosphate. It catalyses the reaction 4-methyl-5-(2-phosphooxyethyl)-thiazole + 4-amino-2-methyl-5-(diphosphooxymethyl)pyrimidine + H(+) = thiamine phosphate + diphosphate. The protein operates within cofactor biosynthesis; thiamine diphosphate biosynthesis; thiamine phosphate from 4-amino-2-methyl-5-diphosphomethylpyrimidine and 4-methyl-5-(2-phosphoethyl)-thiazole: step 1/1. Condenses 4-methyl-5-(beta-hydroxyethyl)thiazole monophosphate (THZ-P) and 2-methyl-4-amino-5-hydroxymethyl pyrimidine pyrophosphate (HMP-PP) to form thiamine monophosphate (TMP). This Azorhizobium caulinodans (strain ATCC 43989 / DSM 5975 / JCM 20966 / LMG 6465 / NBRC 14845 / NCIMB 13405 / ORS 571) protein is Thiamine-phosphate synthase.